We begin with the raw amino-acid sequence, 732 residues long: E3 ubiquitin-protein ligase DCST1 (732 aa).

Residues 1 to 46 (MAFLSSTLHSLGIFEKISRIKEVLKNRLLDLTKRRDQAREQQRKRP) lie on the Cytoplasmic side of the membrane. The chain crosses the membrane as a helical span at residues 47-67 (HTIIQGLLLWSLPVSWIRFLW). Residues 68–76 (RQPGEFPVT) lie on the Extracellular side of the membrane. A helical membrane pass occupies residues 77–97 (AFLLGAGTGGLLAIGLFQLLV). Residues 98 to 107 (NPMNIYEEQK) lie on the Cytoplasmic side of the membrane. The helical transmembrane segment at 108 to 128 (VVALYCLASLGAIGWGTSPHI) threads the bilayer. Residues 129–394 (RCASLLLVPK…VRDYVRQQET (266 aa)) lie on the Extracellular side of the membrane. Residues asparagine 184, asparagine 217, asparagine 346, and asparagine 374 are each glycosylated (N-linked (GlcNAc...) asparagine). Residues 395-415 (YLQWAMGLLHVLLSCTFLLVF) traverse the membrane as a helical segment. Topologically, residues 416–489 (HSAFSYMDHY…RYVIRELLET (74 aa)) are cytoplasmic. Residues 490 to 510 (LPIVLLLLVLCAIDWALYSVF) form a helical membrane-spanning segment. Over 511-576 (DTIRQHSFVQ…PQPISLNARD (66 aa)) the chain is Extracellular. N-linked (GlcNAc...) asparagine glycosylation occurs at asparagine 551. The chain crosses the membrane as a helical span at residues 577-597 (YFKASLPTLLLVCLCLAQAFG). The Cytoplasmic portion of the chain corresponds to 598-732 (YRLRRVIAAF…DSNDDAVYGD (135 aa)). Residues 672–711 (CVVCQAMETPDSYVCPTPDCKALYCRSCWDDMQRLCPVCT) form an RING-type; degenerate zinc finger.

In terms of assembly, interacts with STAT2; the interaction results in STAT2 'Lys-48'-linked ubiquitination leading to its proteasomal degradation. Interacts with DCST2. As to expression, expressed in testis.

Its subcellular location is the cell membrane. It localises to the cytoplasmic vesicle. The protein resides in the secretory vesicle. It is found in the acrosome membrane. The catalysed reaction is S-ubiquitinyl-[E2 ubiquitin-conjugating enzyme]-L-cysteine + [acceptor protein]-L-lysine = [E2 ubiquitin-conjugating enzyme]-L-cysteine + N(6)-ubiquitinyl-[acceptor protein]-L-lysine.. Its pathway is protein modification; protein ubiquitination. In terms of biological role, E3 ubiquitin-protein ligase which mediates 'Lys-48'-linked ubiquitination of STAT2 and induces its proteasomal degradation thereby negatively regulating type-I-interferon signaling. Essential sperm cell-surface protein required for sperm-egg fusion and fertilization. The polypeptide is E3 ubiquitin-protein ligase DCST1 (Dcst1) (Mus musculus (Mouse)).